The chain runs to 231 residues: Small ribosomal subunit protein uS3 (231 aa).

The KH type-2 domain maps to 39 to 108 (IKNYIKKRYK…EISISVLEVK (70 aa)).

Belongs to the universal ribosomal protein uS3 family. Part of the 30S ribosomal subunit. Forms a tight complex with proteins S10 and S14.

Its function is as follows. Binds the lower part of the 30S subunit head. Binds mRNA in the 70S ribosome, positioning it for translation. This Aquifex pyrophilus protein is Small ribosomal subunit protein uS3.